The sequence spans 518 residues: Major facilitator superfamily domain-containing protein 8 (518 aa).

The segment at 1–20 (MAGLRNESEQEPLLGDTPGS) is disordered. The Cytoplasmic segment spans residues 1 to 40 (MAGLRNESEQEPLLGDTPGSREWDILETEEHYKSRWRSIR). The Dileucine internalization motif motif lies at 13–14 (LL). Residues 41–61 (ILYLTMFLSSVGFSVVMMSIW) form a helical membrane-spanning segment. Topologically, residues 62–74 (PYLQKIDPTADTS) are extracellular. The chain crosses the membrane as a helical span at residues 75 to 95 (FLGWVIASYSLGQMVASPIFG). At 96 to 105 (LWSNYRPRKE) the chain is on the cytoplasmic side. The chain crosses the membrane as a helical span at residues 106–126 (PLIVSILISVAANCLYAYLHI). Topologically, residues 127–131 (PASHN) are extracellular. Residues 132-152 (KYYMLVARGLLGIGAGNVAVV) form a helical membrane-spanning segment. The Cytoplasmic segment spans residues 153–173 (RSYTAGATSLQERTSSMANIS). The helical transmembrane segment at 174–194 (MCQALGFILGPVFQTCFTFLG) threads the bilayer. At 195–211 (EKGVTWDVIKLQINMYT) the chain is on the extracellular side. A helical membrane pass occupies residues 212–232 (TPVLLSAFLGILNIILILAIL). Residues 233–266 (REHRVDDSGRQCKSINFEEASTDEAQVPQGNIDQ) lie on the Cytoplasmic side of the membrane. The helical transmembrane segment at 267-287 (VAVVAINVLFFVTLFIFALFE) threads the bilayer. Over 288–304 (TIITPLTMDMYAWTQEQ) the chain is Extracellular. Residues 305 to 325 (AVLYNGIILAALGVEAVVIFL) form a helical membrane-spanning segment. The Cytoplasmic segment spans residues 326–337 (GVKLLSKKIGER). The helical transmembrane segment at 338 to 358 (AILLGGLIVVWVGFFILLPWG) threads the bilayer. Residues 359–412 (NQFPKIQWEDLHNNSIPNTTFGEIIIGLWKSPMEDDNERPTGCSIEQAWCLYTP) are Extracellular-facing. 2 N-linked (GlcNAc...) asparagine glycosylation sites follow: Asn-371 and Asn-376. The helical transmembrane segment at 413 to 433 (VIHLAQFLTSAVLIGLGYPVC) threads the bilayer. Residues 434–451 (NLMSYTLYSKILGPKPQG) lie on the Cytoplasmic side of the membrane. Residues 452 to 472 (VYMGWLTASGSGARILGPMFI) form a helical membrane-spanning segment. The Extracellular segment spans residues 473–482 (SQVYAHWGPR). The chain crosses the membrane as a helical span at residues 483-503 (WAFSLVCGIIVLTITLLGVVY). Residues 504–518 (KRLIALSVRYGRIQE) lie on the Cytoplasmic side of the membrane.

This sequence belongs to the major facilitator superfamily. Expressed at very low levels in all tissues tested.

The protein localises to the endosome membrane. The protein resides in the lysosome membrane. It carries out the reaction chloride(in) = chloride(out). The enzyme catalyses iodide(out) = iodide(in). It catalyses the reaction fluoride(in) = fluoride(out). Its activity is regulated as follows. Inhibited by chloride channel blockers 4,4'-diisothiocyano-2,2'-stilbenedisulfonate (DIDS), niflumic acid (NFA), and 5-Nitro-2-(3-phenylpropylamino) benzoic acid (NPPB). Functionally, outward-rectifying chloride channel involved in endolysosomal chloride homeostasis, membrane fusion and function. Conducts chloride currents up to hundreds of picoamperes. Regulates lysosomal calcium content by reducing the lysosomal membrane potential, thereby activating TRPML1 channel and further release of lysosomal calcium ions. Regulates the pH in endolysosomal compartments and may contribute to progressive acidification from endosome to lysosome. Permeable to other halides such as iodide and fluoride ions. This Homo sapiens (Human) protein is Major facilitator superfamily domain-containing protein 8.